We begin with the raw amino-acid sequence, 448 residues long: Asparagine--tRNA ligase (448 aa).

The protein belongs to the class-II aminoacyl-tRNA synthetase family. As to quaternary structure, homodimer.

It localises to the cytoplasm. The enzyme catalyses tRNA(Asn) + L-asparagine + ATP = L-asparaginyl-tRNA(Asn) + AMP + diphosphate + H(+). This is Asparagine--tRNA ligase from Streptococcus suis (strain 98HAH33).